A 275-amino-acid polypeptide reads, in one-letter code: Tropinone reductase-like 2 (275 aa).

Residue 17–41 participates in NAD(+) binding; sequence IITGGASGIGACTAELFHENGAKVV. Ser150 contacts substrate. Tyr163 serves as the catalytic Proton acceptor.

It belongs to the short-chain dehydrogenases/reductases (SDR) family.

In terms of biological role, has no tropinone reductase activity. The sequence is that of Tropinone reductase-like 2 from Erythroxylum coca (Coca plant).